We begin with the raw amino-acid sequence, 101 residues long: Small ribosomal subunit protein uS14 (101 aa).

Residues 33 to 69 are disordered; sequence SQDASYEEKIDASTKLQKLPRDSSPSRHRNRCELSGR. A compositionally biased stretch (basic and acidic residues) spans 51–68; it reads LPRDSSPSRHRNRCELSG.

This sequence belongs to the universal ribosomal protein uS14 family. Part of the 30S ribosomal subunit. Contacts proteins S3 and S10.

Functionally, binds 16S rRNA, required for the assembly of 30S particles and may also be responsible for determining the conformation of the 16S rRNA at the A site. The protein is Small ribosomal subunit protein uS14 of Xanthomonas axonopodis pv. citri (strain 306).